Reading from the N-terminus, the 413-residue chain is MKIYLVGGAVRDALLGLPVKDKDWVVVGATPQEMLDAGYQQVGRDFPVFLHPQTHEEYALARTERKSGSGYTGFTCYTAPDVTLEADLQRRDLTINALARDDDGQIIDPYHGRRDLEARLLRHVSPAFGEDPLRVLRVARFAARYAHLSFRIADETLALMREMTAAGELEHLTPERVWKETENALTTRNPQVYFQVLRDCGALRVLFPEIDALFGVPAPAKWHPEIDTGVHTLMTLSMAAMLSPQLDVRFATLCHDLGKGLTPKNLWPRHHGHGPAGVKLVEQLCQRLRVPNDLRDLAKLVAEYHDLIHTFPILQPKTIVKLFDAIDAWRKPQRVEQIALTSEADVRGRTGFEASDYPQGRWLREAWQVAQAVPTKEVVEAGFKGIEIREELTKRRIAAVANWKEKRCPNPAS.

ATP is bound by residues Gly8 and Arg11. Positions 8 and 11 each coordinate CTP. Mg(2+) is bound by residues Asp21 and Asp23. ATP-binding residues include Arg91, Arg137, and Arg140. The CTP site is built by Arg91, Arg137, and Arg140. Residues 228–329 enclose the HD domain; that stretch reads TGVHTLMTLS…VKLFDAIDAW (102 aa).

It belongs to the tRNA nucleotidyltransferase/poly(A) polymerase family. Bacterial CCA-adding enzyme type 1 subfamily. Monomer. Can also form homodimers and oligomers. The cofactor is Mg(2+). It depends on Ni(2+) as a cofactor.

It catalyses the reaction a tRNA precursor + 2 CTP + ATP = a tRNA with a 3' CCA end + 3 diphosphate. The enzyme catalyses a tRNA with a 3' CCA end + 2 CTP + ATP = a tRNA with a 3' CCACCA end + 3 diphosphate. In terms of biological role, catalyzes the addition and repair of the essential 3'-terminal CCA sequence in tRNAs without using a nucleic acid template. Adds these three nucleotides in the order of C, C, and A to the tRNA nucleotide-73, using CTP and ATP as substrates and producing inorganic pyrophosphate. tRNA 3'-terminal CCA addition is required both for tRNA processing and repair. Also involved in tRNA surveillance by mediating tandem CCA addition to generate a CCACCA at the 3' terminus of unstable tRNAs. While stable tRNAs receive only 3'-terminal CCA, unstable tRNAs are marked with CCACCA and rapidly degraded. This chain is Multifunctional CCA protein, found in Salmonella paratyphi A (strain ATCC 9150 / SARB42).